The sequence spans 219 residues: MGEKRQARQGADVLLQEEPLRFQTRKQVGLLGGNFNPVHLAHLVMADQVQNQLGLDKVYLMPTYLPPHVDEKKTISSEHRLAMLELAVADNPCLDIEPIELIRKGKSYTYDTMKALKEANPDTDYYFIIGGDMVEYLPKWHRIDDLLHLVQFVGIRRPNYPTESTYPIIWVDVPQMAISSTLIRQKVKSGCSTRYLLPENVINYIQEKGLYQDELDNKL.

This sequence belongs to the NadD family.

It carries out the reaction nicotinate beta-D-ribonucleotide + ATP + H(+) = deamido-NAD(+) + diphosphate. Its pathway is cofactor biosynthesis; NAD(+) biosynthesis; deamido-NAD(+) from nicotinate D-ribonucleotide: step 1/1. Its function is as follows. Catalyzes the reversible adenylation of nicotinate mononucleotide (NaMN) to nicotinic acid adenine dinucleotide (NaAD). The protein is Probable nicotinate-nucleotide adenylyltransferase of Enterococcus faecalis (strain ATCC 700802 / V583).